A 266-amino-acid chain; its full sequence is GTP-binding protein Rhes (266 aa).

Residue 26 to 33 participates in GTP binding; that stretch reads GASRVGKS. The Effector region motif lies at 48-56; sequence YTPTIEDFH. GTP contacts are provided by residues 73-77 and 140-143; these read DTSGN and NKND. The interaction with GNB1, GNB2 and GNB3 stretch occupies residues 189-235; the sequence is MAKLPHEMSPALHHKISVQYGDAFHPRPFCMRRTKVAGAYGMVSPFA. At C263 the chain carries Cysteine methyl ester. A lipid anchor (S-farnesyl cysteine) is attached at C263. The propeptide at 264–266 is removed in mature form; the sequence is SIQ.

This sequence belongs to the small GTPase superfamily. RasD family. As to quaternary structure, monomer (Potential). Interacts with PIK3CA and UBE2I. Interacts with GNB1, GNB2 and GNB3. In terms of processing, farnesylated. Farnesylation is required for membrane targeting. Highly expressed in brain; prominently in the striatum and weakly in kidney, thyroid, lung, heart and testis. Not expressed in liver. Expressed in pancreatic cell lines and in a embryonic stem cell line.

Its subcellular location is the cell membrane. GTPase signaling protein that binds to and hydrolyzes GTP. Regulates signaling pathways involving G-proteins-coupled receptor and heterotrimeric proteins such as GNB1, GNB2 and GNB3. May be involved in selected striatal competencies, mainly locomotor activity and motor coordination. The polypeptide is GTP-binding protein Rhes (Rasd2) (Mus musculus (Mouse)).